We begin with the raw amino-acid sequence, 332 residues long: Glycerol-3-phosphate dehydrogenase [NAD(P)+] (332 aa).

3 residues coordinate NADPH: tryptophan 11, arginine 30, and lysine 108. Lysine 108, glycine 137, and serine 139 together coordinate sn-glycerol 3-phosphate. An NADPH-binding site is contributed by alanine 141. Lysine 192, aspartate 245, serine 255, arginine 256, and asparagine 257 together coordinate sn-glycerol 3-phosphate. Residue lysine 192 is the Proton acceptor of the active site. Arginine 256 provides a ligand contact to NADPH. The NADPH site is built by valine 280 and glutamate 282.

This sequence belongs to the NAD-dependent glycerol-3-phosphate dehydrogenase family.

The protein localises to the cytoplasm. The catalysed reaction is sn-glycerol 3-phosphate + NAD(+) = dihydroxyacetone phosphate + NADH + H(+). It carries out the reaction sn-glycerol 3-phosphate + NADP(+) = dihydroxyacetone phosphate + NADPH + H(+). The protein operates within membrane lipid metabolism; glycerophospholipid metabolism. Functionally, catalyzes the reduction of the glycolytic intermediate dihydroxyacetone phosphate (DHAP) to sn-glycerol 3-phosphate (G3P), the key precursor for phospholipid synthesis. This is Glycerol-3-phosphate dehydrogenase [NAD(P)+] from Burkholderia cenocepacia (strain ATCC BAA-245 / DSM 16553 / LMG 16656 / NCTC 13227 / J2315 / CF5610) (Burkholderia cepacia (strain J2315)).